Reading from the N-terminus, the 126-residue chain is Small ribosomal subunit protein uS12 (126 aa).

The interval 1-29 (MPTIQQLIRQPRAPKKRRSKSPALQKCPQ) is disordered. Position 89 is a 3-methylthioaspartic acid (D89).

The protein belongs to the universal ribosomal protein uS12 family. Part of the 30S ribosomal subunit. Contacts proteins S8 and S17. May interact with IF1 in the 30S initiation complex.

In terms of biological role, with S4 and S5 plays an important role in translational accuracy. Its function is as follows. Interacts with and stabilizes bases of the 16S rRNA that are involved in tRNA selection in the A site and with the mRNA backbone. Located at the interface of the 30S and 50S subunits, it traverses the body of the 30S subunit contacting proteins on the other side and probably holding the rRNA structure together. The combined cluster of proteins S8, S12 and S17 appears to hold together the shoulder and platform of the 30S subunit. The chain is Small ribosomal subunit protein uS12 from Protochlamydia amoebophila (strain UWE25).